A 261-amino-acid polypeptide reads, in one-letter code: tRNA pseudouridine synthase A (261 aa).

The active-site Nucleophile is Asp51. Residue Tyr109 participates in substrate binding.

This sequence belongs to the tRNA pseudouridine synthase TruA family. As to quaternary structure, homodimer.

It carries out the reaction uridine(38/39/40) in tRNA = pseudouridine(38/39/40) in tRNA. Functionally, formation of pseudouridine at positions 38, 39 and 40 in the anticodon stem and loop of transfer RNAs. The chain is tRNA pseudouridine synthase A from Shewanella halifaxensis (strain HAW-EB4).